We begin with the raw amino-acid sequence, 316 residues long: tRNA methyltransferase 10 homolog B (316 aa).

Disordered stretches follow at residues 1-30 and 42-98; these read MDCE…RDDG and VEYD…DLGN. The segment covering 63 to 82 has biased composition (basic residues); sequence VQRKQRHWERIVSSKKSKRK. Positions 75–96 form a coiled coil; that stretch reads SSKKSKRKQERERRKIKRAEDL. Residues 83–95 show a composition bias toward basic and acidic residues; the sequence is QERERRKIKRAED. In terms of domain architecture, SAM-dependent MTase TRM10-type spans 113–310; the sequence is TKEKLLEAKH…KGVSPGKGYI (198 aa).

It belongs to the class IV-like SAM-binding methyltransferase superfamily. TRM10 family.

It carries out the reaction guanosine(9) in tRNA + S-adenosyl-L-methionine = N(1)-methylguanosine(9) in tRNA + S-adenosyl-L-homocysteine + H(+). S-adenosyl-L-methionine-dependent guanine N(1)-methyltransferase that catalyzes the formation of N(1)-methylguanine at position 9 (m1G9) in tRNAs. Probably not able to catalyze formation of N(1)-methyladenine at position 9 (m1A9) in tRNAs. In Rattus norvegicus (Rat), this protein is tRNA methyltransferase 10 homolog B (Trmt10b).